Here is a 358-residue protein sequence, read N- to C-terminus: Peptide chain release factor 1 (358 aa).

Gln-233 is modified (N5-methylglutamine).

Belongs to the prokaryotic/mitochondrial release factor family. Methylated by PrmC. Methylation increases the termination efficiency of RF1.

It localises to the cytoplasm. Functionally, peptide chain release factor 1 directs the termination of translation in response to the peptide chain termination codons UAG and UAA. The sequence is that of Peptide chain release factor 1 from Clostridium botulinum (strain 657 / Type Ba4).